A 561-amino-acid chain; its full sequence is Arginine--tRNA ligase (561 aa).

The short motif at 119 to 129 is the 'HIGH' region element; it reads PNIAKPMSMGH.

This sequence belongs to the class-I aminoacyl-tRNA synthetase family. Monomer.

The protein resides in the cytoplasm. It carries out the reaction tRNA(Arg) + L-arginine + ATP = L-arginyl-tRNA(Arg) + AMP + diphosphate. The chain is Arginine--tRNA ligase from Lactobacillus acidophilus (strain ATCC 700396 / NCK56 / N2 / NCFM).